We begin with the raw amino-acid sequence, 293 residues long: Large ribosomal subunit protein uL18 (293 aa).

Positions 249 to 273 are disordered; it reads DASPAAKKAAKPSKRHTAKRLTYDE. A compositionally biased stretch (basic residues) spans 256–267; the sequence is KAAKPSKRHTAK.

Belongs to the universal ribosomal protein uL18 family. As to quaternary structure, component of the large ribosomal subunit (LSU).

The protein localises to the cytoplasm. Its subcellular location is the nucleus. In terms of biological role, component of the ribosome, a large ribonucleoprotein complex responsible for the synthesis of proteins in the cell. The small ribosomal subunit (SSU) binds messenger RNAs (mRNAs) and translates the encoded message by selecting cognate aminoacyl-transfer RNA (tRNA) molecules. The large subunit (LSU) contains the ribosomal catalytic site termed the peptidyl transferase center (PTC), which catalyzes the formation of peptide bonds, thereby polymerizing the amino acids delivered by tRNAs into a polypeptide chain. The nascent polypeptides leave the ribosome through a tunnel in the LSU and interact with protein factors that function in enzymatic processing, targeting, and the membrane insertion of nascent chains at the exit of the ribosomal tunnel. The protein is Large ribosomal subunit protein uL18 (rpl-5) of Caenorhabditis elegans.